A 376-amino-acid polypeptide reads, in one-letter code: MSTVPPPLSVLLELTHRCPLACPYCSNPIALAALREEMDTAGWRSLLEQAAEMGVLQAHFSGGEPMLRKDLPELVAHARALGLYSNLITSGVAGGEPMLDQLQAAGLEHVQLSVQDVDPAGADHIAGYRNSLSKKRAFAAAVRARGLPLTLNAVIHRHNAERVPGMIALALEWGAERIEVAHTQYYGWGLRNRAALMPSREQLAATIVAVETARRSLGDQLAIDFVTPDYYARQPKPCMGGWAQRFVNISPRGDVLPCHAAETIDGLQFEKLRDRSLADIWNHGEAFARFRGTAWMPEVCQGCPKREIDWGGCRCQALALAGDAATLDPVCERSPAHAGIRATAEREAASPAPDFIYRRPERPAAVAAEAAISDTE.

In terms of domain architecture, Radical SAM core spans 4 to 219; the sequence is VPPPLSVLLE…VETARRSLGD (216 aa). 3 residues coordinate [4Fe-4S] cluster: cysteine 18, cysteine 22, and cysteine 25.

It belongs to the radical SAM superfamily. PqqE family. Interacts with PqqD. The interaction is necessary for activity of PqqE. Requires [4Fe-4S] cluster as cofactor.

It carries out the reaction [PQQ precursor protein] + S-adenosyl-L-methionine = E-Y cross-linked-[PQQ precursor protein] + 5'-deoxyadenosine + L-methionine + H(+). It participates in cofactor biosynthesis; pyrroloquinoline quinone biosynthesis. Catalyzes the cross-linking of a glutamate residue and a tyrosine residue in the PqqA protein as part of the biosynthesis of pyrroloquinoline quinone (PQQ). This Xanthomonas campestris pv. campestris (strain B100) protein is PqqA peptide cyclase.